A 337-amino-acid polypeptide reads, in one-letter code: Phenylalanine--tRNA ligase alpha subunit (337 aa).

Glu252 provides a ligand contact to Mg(2+).

Belongs to the class-II aminoacyl-tRNA synthetase family. Phe-tRNA synthetase alpha subunit type 1 subfamily. As to quaternary structure, tetramer of two alpha and two beta subunits. Mg(2+) serves as cofactor.

The protein resides in the cytoplasm. It catalyses the reaction tRNA(Phe) + L-phenylalanine + ATP = L-phenylalanyl-tRNA(Phe) + AMP + diphosphate + H(+). The protein is Phenylalanine--tRNA ligase alpha subunit of Saccharophagus degradans (strain 2-40 / ATCC 43961 / DSM 17024).